A 116-amino-acid chain; its full sequence is Chondroitin proteoglycan 7 (116 aa).

The signal sequence occupies residues 1-19 (MQTITILALIACVAVPIFA). Residues 29 to 102 (DVVESSGEGS…NAVVASDSPK (74 aa)) form a disordered region. 2 stretches are compositionally biased toward low complexity: residues 32 to 41 (ESSGEGSGES) and 48 to 58 (VESSGEGSGES). O-linked (Xyl...) (chondroitin sulfate) serine glycosylation is found at S68, S72, S76, S84, and S88.

This chain is Chondroitin proteoglycan 7, found in Caenorhabditis elegans.